The sequence spans 357 residues: Non-structural protein NS2 (357 aa).

Disordered regions lie at residues 169–191 and 229–266; these read PRLQ…DEAK and DERD…HPKT. Over residues 233–249 the composition is skewed to basic and acidic residues; that stretch reads EGDRDERGDEEQVKTLS. Residues 250-260 are compositionally biased toward acidic residues; sequence DDDDQGEDASD.

Belongs to the orbivirus non-structural protein NS2 family.

Its function is as follows. Single-stranded RNA-binding protein. This chain is Non-structural protein NS2 (Segment-8), found in Antilocapra americana (Pronghorn).